A 65-amino-acid chain; its full sequence is Large ribosomal subunit protein bL35 (65 aa).

Residues 1–26 (MPKIKTHRGAAKRFSKTGTGKIKRSH) show a composition bias toward basic residues. The disordered stretch occupies residues 1–41 (MPKIKTHRGAAKRFSKTGTGKIKRSHAFTSHILTSKTRKNK).

This sequence belongs to the bacterial ribosomal protein bL35 family.

This chain is Large ribosomal subunit protein bL35, found in Geotalea daltonii (strain DSM 22248 / JCM 15807 / FRC-32) (Geobacter daltonii).